The primary structure comprises 68 residues: DNA-directed RNA polymerase subunit Rpo10 (68 aa).

Residues C7, C10, C44, and C45 each contribute to the Zn(2+) site.

This sequence belongs to the archaeal Rpo10/eukaryotic RPB10 RNA polymerase subunit family. In terms of assembly, part of the RNA polymerase complex. Zn(2+) is required as a cofactor.

Its subcellular location is the cytoplasm. It catalyses the reaction RNA(n) + a ribonucleoside 5'-triphosphate = RNA(n+1) + diphosphate. Its function is as follows. DNA-dependent RNA polymerase (RNAP) catalyzes the transcription of DNA into RNA using the four ribonucleoside triphosphates as substrates. In Methanococcus maripaludis (strain C5 / ATCC BAA-1333), this protein is DNA-directed RNA polymerase subunit Rpo10.